We begin with the raw amino-acid sequence, 473 residues long: Photosystem II CP43 reaction center protein (473 aa).

Positions 1–14 (MKILYSQRRFYPVE) are excised as a propeptide. Residue Thr-15 is modified to N-acetylthreonine. Thr-15 carries the phosphothreonine modification. Helical transmembrane passes span 69 to 93 (LFEV…PHLA), 134 to 155 (LIGP…KDKN), 178 to 200 (KALY…RKIT), 255 to 275 (KPFA…LSYS), and 291 to 312 (WFNN…ASQA). Residue Glu-367 participates in [CaMn4O5] cluster binding. Residues 447–471 (RARAAAAGFEKGIDRDFEPVLSMTP) traverse the membrane as a helical segment.

This sequence belongs to the PsbB/PsbC family. PsbC subfamily. In terms of assembly, PSII is composed of 1 copy each of membrane proteins PsbA, PsbB, PsbC, PsbD, PsbE, PsbF, PsbH, PsbI, PsbJ, PsbK, PsbL, PsbM, PsbT, PsbX, PsbY, PsbZ, Psb30/Ycf12, at least 3 peripheral proteins of the oxygen-evolving complex and a large number of cofactors. It forms dimeric complexes. It depends on Binds multiple chlorophylls and provides some of the ligands for the Ca-4Mn-5O cluster of the oxygen-evolving complex. It may also provide a ligand for a Cl- that is required for oxygen evolution. PSII binds additional chlorophylls, carotenoids and specific lipids. as a cofactor. In terms of processing, phosphorylated on threonine residue(s).

The protein resides in the plastid. It is found in the chloroplast thylakoid membrane. One of the components of the core complex of photosystem II (PSII). It binds chlorophyll and helps catalyze the primary light-induced photochemical processes of PSII. PSII is a light-driven water:plastoquinone oxidoreductase, using light energy to abstract electrons from H(2)O, generating O(2) and a proton gradient subsequently used for ATP formation. In Marchantia polymorpha (Common liverwort), this protein is Photosystem II CP43 reaction center protein.